We begin with the raw amino-acid sequence, 584 residues long: Protein disulfide-isomerase-like protein of the testis (584 aa).

Positions 1 to 20 (MDLLWMPLLLVAACVSAVHS) are cleaved as a signal peptide. 4 N-linked (GlcNAc...) asparagine glycosylation sites follow: N58, N128, N160, and N340. In terms of domain architecture, Thioredoxin spans 388 to 451 (LVKQLVGKNF…IAKIDVTAND (64 aa)). The N-linked (GlcNAc...) asparagine glycan is linked to N540. Residues 581 to 584 (KEEL) carry the Prevents secretion from ER motif.

The protein belongs to the protein disulfide isomerase family. As to quaternary structure, homodimer. The homodimer is not disulfide-linked. Interacts with ERO1A and CLGN. Post-translationally, N-glycosylated. As to expression, testis-specific.

It localises to the endoplasmic reticulum. Functionally, probable redox-inactive chaperone involved in spermatogenesis. This chain is Protein disulfide-isomerase-like protein of the testis (PDILT), found in Homo sapiens (Human).